We begin with the raw amino-acid sequence, 366 residues long: Ribosomal RNA large subunit methyltransferase M (366 aa).

S-adenosyl-L-methionine contacts are provided by residues serine 188, 221-224 (CPGG), aspartate 240, aspartate 260, and aspartate 277. Lysine 306 acts as the Proton acceptor in catalysis.

This sequence belongs to the class I-like SAM-binding methyltransferase superfamily. RNA methyltransferase RlmE family. RlmM subfamily. In terms of assembly, monomer.

Its subcellular location is the cytoplasm. It catalyses the reaction cytidine(2498) in 23S rRNA + S-adenosyl-L-methionine = 2'-O-methylcytidine(2498) in 23S rRNA + S-adenosyl-L-homocysteine + H(+). Its function is as follows. Catalyzes the 2'-O-methylation at nucleotide C2498 in 23S rRNA. The protein is Ribosomal RNA large subunit methyltransferase M of Salmonella gallinarum (strain 287/91 / NCTC 13346).